A 139-amino-acid polypeptide reads, in one-letter code: Large ribosomal subunit protein bL21 (139 aa).

The protein belongs to the bacterial ribosomal protein bL21 family. As to quaternary structure, part of the 50S ribosomal subunit. Contacts protein L20.

This protein binds to 23S rRNA in the presence of protein L20. This Prochlorococcus marinus (strain NATL1A) protein is Large ribosomal subunit protein bL21.